The chain runs to 779 residues: Phosphatidylinositol 4-phosphate 5-kinase 4 (779 aa).

The interval Gln-20–Ile-61 is disordered. Positions Thr-39 to Thr-54 are enriched in acidic residues. MORN repeat units lie at residues Tyr-77–Met-99, Tyr-100–Thr-122, Tyr-123–Thr-145, Tyr-146–Val-168, Tyr-169–Tyr-191, Tyr-192–Arg-214, Tyr-215–Phe-237, and Tyr-238–Asp-259. Residues Thr-382 to Phe-775 form the PIPK domain. Positions Tyr-735–Ser-756 are activation loop.

The catalysed reaction is a 1,2-diacyl-sn-glycero-3-phospho-(1D-myo-inositol 4-phosphate) + ATP = a 1,2-diacyl-sn-glycero-3-phospho-(1D-myo-inositol-4,5-bisphosphate) + ADP + H(+). This Arabidopsis thaliana (Mouse-ear cress) protein is Phosphatidylinositol 4-phosphate 5-kinase 4 (PIP5K4).